A 115-amino-acid chain; its full sequence is Aspartate 1-decarboxylase (115 aa).

Serine 25 serves as the catalytic Schiff-base intermediate with substrate; via pyruvic acid. Residue serine 25 is modified to Pyruvic acid (Ser). Threonine 57 contributes to the substrate binding site. Tyrosine 58 functions as the Proton donor in the catalytic mechanism. 73–75 is a substrate binding site; sequence GAA.

It belongs to the PanD family. As to quaternary structure, heterooctamer of four alpha and four beta subunits. Pyruvate serves as cofactor. Is synthesized initially as an inactive proenzyme, which is activated by self-cleavage at a specific serine bond to produce a beta-subunit with a hydroxyl group at its C-terminus and an alpha-subunit with a pyruvoyl group at its N-terminus.

It is found in the cytoplasm. The catalysed reaction is L-aspartate + H(+) = beta-alanine + CO2. Its pathway is cofactor biosynthesis; (R)-pantothenate biosynthesis; beta-alanine from L-aspartate: step 1/1. In terms of biological role, catalyzes the pyruvoyl-dependent decarboxylation of aspartate to produce beta-alanine. The sequence is that of Aspartate 1-decarboxylase from Kosmotoga olearia (strain ATCC BAA-1733 / DSM 21960 / TBF 19.5.1).